The primary structure comprises 628 residues: Alpha-L-arabinofuranosidase A (628 aa).

Residues Met1–Gly25 form the signal peptide. N-linked (GlcNAc...) asparagine glycosylation is found at Asn36, Asn51, Asn74, Asn152, Asn171, Asn260, Asn359, and Asn493.

It belongs to the glycosyl hydrolase 51 family.

Its subcellular location is the secreted. It catalyses the reaction Hydrolysis of terminal non-reducing alpha-L-arabinofuranoside residues in alpha-L-arabinosides.. It functions in the pathway glycan metabolism; L-arabinan degradation. In terms of biological role, alpha-L-arabinofuranosidase involved in the degradation of arabinoxylan, a major component of plant hemicellulose. Acts only on small linear 1,5-alpha-linked L-arabinofuranosyl oligosaccharides. The chain is Alpha-L-arabinofuranosidase A (abfA) from Aspergillus kawachii (strain NBRC 4308) (White koji mold).